The sequence spans 294 residues: Cell division protein ZipA (294 aa).

Methionine 1 is a topological domain (periplasmic). A helical membrane pass occupies residues 2-22; sequence EIGLREWLILIGIIVIAGILF. Topologically, residues 23–294 are cytoplasmic; it reads DGWRRMRGGK…FERRALTQKR (272 aa). 2 disordered regions span residues 64-111 and 126-146; these read THKE…GDLN and KDDFVADNNRHGAAATPSTPV. A compositionally biased stretch (basic and acidic residues) spans 82–91; the sequence is ARERERDPKP.

Belongs to the ZipA family. In terms of assembly, interacts with FtsZ via their C-terminal domains.

The protein resides in the cell inner membrane. Functionally, essential cell division protein that stabilizes the FtsZ protofilaments by cross-linking them and that serves as a cytoplasmic membrane anchor for the Z ring. Also required for the recruitment to the septal ring of downstream cell division proteins. This is Cell division protein ZipA from Pseudomonas entomophila (strain L48).